Reading from the N-terminus, the 207-residue chain is SPRY domain-containing protein 4 (207 aa).

Positions 12 to 207 (YRWGTKRWGV…HSGLEVPKGL (196 aa)) constitute a B30.2/SPRY domain. 2 positions are modified to N6-acetyllysine: K53 and K130. At K139 the chain carries N6-succinyllysine.

The chain is SPRY domain-containing protein 4 (Spryd4) from Rattus norvegicus (Rat).